We begin with the raw amino-acid sequence, 348 residues long: Fe(3+) ions import ATP-binding protein FbpC (348 aa).

One can recognise an ABC transporter domain in the interval 6–236 (LSLEGATVRF…PADAFVARFL (231 aa)). An ATP-binding site is contributed by 38 to 45 (GPSGSGKS).

It belongs to the ABC transporter superfamily. Fe(3+) ion importer (TC 3.A.1.10) family. As to quaternary structure, the complex is composed of two ATP-binding proteins (FbpC), two transmembrane proteins (FbpB) and a solute-binding protein (FbpA).

It localises to the cell membrane. It carries out the reaction Fe(3+)(out) + ATP + H2O = Fe(3+)(in) + ADP + phosphate + H(+). Its function is as follows. Part of the ABC transporter complex FbpABC involved in Fe(3+) ions import. Responsible for energy coupling to the transport system. The polypeptide is Fe(3+) ions import ATP-binding protein FbpC (Streptomyces coelicolor (strain ATCC BAA-471 / A3(2) / M145)).